Here is a 60-residue protein sequence, read N- to C-terminus: Large ribosomal subunit protein bL32 (60 aa).

Residues 1 to 60 (MAVQQVKKSRSKRDMRRSHDSLTNPTLSTDKSTGELHLRHHVSPNGFYKGRKVVDTKSED) form a disordered region. Basic residues predominate over residues 7 to 16 (KKSRSKRDMR). Residues 22–31 (LTNPTLSTDK) show a composition bias toward polar residues.

Belongs to the bacterial ribosomal protein bL32 family.

This is Large ribosomal subunit protein bL32 from Francisella tularensis subsp. holarctica (strain LVS).